The chain runs to 230 residues: Complex I assembly factor TMEM126B, mitochondrial (230 aa).

Residue Ser34 is modified to Phosphoserine. Helical transmembrane passes span 72-92 (IYQM…SNFL), 110-130 (LATL…IDAL), 141-161 (VFRS…SLAF), and 199-219 (IPLV…YAVF).

The protein belongs to the TMEM126 family. In terms of assembly, part of the mitochondrial complex I assembly/MCIA complex that comprises at least the core subunits TMEM126B, NDUFAF1, ECSIT and ACAD9 and complement subunits such as COA1 and TMEM186. Associates with the intermediate 370 kDa subcomplex of incompletely assembled complex I. Interacts with TMEM70.

It localises to the mitochondrion membrane. In terms of biological role, as part of the MCIA complex, involved in the assembly of the mitochondrial complex I. Participates in constructing the membrane arm of complex I. In Homo sapiens (Human), this protein is Complex I assembly factor TMEM126B, mitochondrial.